The primary structure comprises 458 residues: Argininosuccinate lyase (458 aa).

It belongs to the lyase 1 family. Argininosuccinate lyase subfamily.

Its subcellular location is the cytoplasm. It carries out the reaction 2-(N(omega)-L-arginino)succinate = fumarate + L-arginine. It functions in the pathway amino-acid biosynthesis; L-arginine biosynthesis; L-arginine from L-ornithine and carbamoyl phosphate: step 3/3. In Salmonella schwarzengrund (strain CVM19633), this protein is Argininosuccinate lyase.